The sequence spans 863 residues: Protein translocase subunit SecA (863 aa).

ATP is bound by residues Q88, 106-110, and D507; that span reads GEGKT. Residues 806–863 form a disordered region; the sequence is KSHEQNEQFLSNTTESGVNENGEAQITKVPRNSPCPCGSGKKYKECHGKSGPKKGILA. Residues 812–829 show a composition bias toward polar residues; it reads EQFLSNTTESGVNENGEA. C840, C842, C851, and H852 together coordinate Zn(2+).

This sequence belongs to the SecA family. As to quaternary structure, monomer and homodimer. Part of the essential Sec protein translocation apparatus which comprises SecA, SecYEG and auxiliary proteins SecDF-YajC and YidC. Zn(2+) is required as a cofactor.

It localises to the cell inner membrane. It is found in the cytoplasm. It carries out the reaction ATP + H2O + cellular proteinSide 1 = ADP + phosphate + cellular proteinSide 2.. Part of the Sec protein translocase complex. Interacts with the SecYEG preprotein conducting channel. Has a central role in coupling the hydrolysis of ATP to the transfer of proteins into and across the cell membrane, serving as an ATP-driven molecular motor driving the stepwise translocation of polypeptide chains across the membrane. The protein is Protein translocase subunit SecA of Campylobacter lari (strain RM2100 / D67 / ATCC BAA-1060).